We begin with the raw amino-acid sequence, 319 residues long: Free fatty acid receptor 3 (319 aa).

At 1–15 (MDTSFFPGNHWLFFS) the chain is on the extracellular side. The helical transmembrane segment at 16 to 36 (VDLLVFLVGLPLNVMALVVFV) threads the bilayer. The Cytoplasmic portion of the chain corresponds to 37–43 (NKLRRRP). The helical transmembrane segment at 44–64 (VAVDLLLLNLTISDLLLLLFL) threads the bilayer. At 65-98 (PFRIVEAACGMKWILPFIFCPLSGFLFFTTIYLT) the chain is on the extracellular side. The cysteines at positions 84 and 165 are disulfide-linked. Residues 99-119 (SLFLMTVSIERFLSVAYPLWY) form a helical membrane-spanning segment. Topologically, residues 120-127 (KTRPRLAQ) are cytoplasmic. Residues 128 to 148 (AGLVSGICWFLASAHCSVIYV) traverse the membrane as a helical segment. At 149–183 (TEYWGNATYSQGTNGTCYLEFREDQLAILLPVRLE) the chain is on the extracellular side. Residues 184-206 (MAVVLFMVPLCITSYCYSRLVWI) form a helical membrane-spanning segment. Topologically, residues 207–218 (LSQGASRRRRKR) are cytoplasmic. Residues 219-239 (VMGLLVATLLIFFVCFGPYNM) traverse the membrane as a helical segment. At 240–254 (SHVVGYVRGESPTWR) the chain is on the extracellular side. A helical transmembrane segment spans residues 255–275 (SYVLLLSTLNSCIDPLVFYFS). Over 276–319 (SSKFQADFHQLLSRLIRACVPWTQEVSLELKVKNGEEPSKECPS) the chain is Cytoplasmic.

Belongs to the G-protein coupled receptor 1 family. In terms of tissue distribution, expressed in the sympathetic nervous system.

The protein resides in the cell membrane. In terms of biological role, g protein-coupled receptor that is activated by a major product of dietary fiber digestion, the short chain fatty acids (SCFAs), and that plays a role in the regulation of whole-body energy homeostasis and in intestinal immunity. In omnivorous mammals, the short chain fatty acids acetate, propionate and butyrate are produced primarily by the gut microbiome that metabolizes dietary fibers. SCFAs serve as a source of energy but also act as signaling molecules. That G protein-coupled receptor is probably coupled to the pertussis toxin-sensitive, G(i/o)-alpha family of G proteins. Its activation results in the formation of inositol 1,4,5-trisphosphate, the mobilization of intracellular calcium, the phosphorylation of the MAPK3/ERK1 and MAPK1/ERK2 kinases and the inhibition of intracellular cAMP accumulation. Activated by SCFAs and by beta-hydroxybutyrate, a ketone body produced by the liver upon starvation, it inhibits N-type calcium channels and modulates the activity of sympathetic neurons through a signaling cascade involving the beta and gamma subunits of its coupled G protein, phospholipase C and MAP kinases. Thereby, it may regulate energy expenditure through the control of the sympathetic nervous system that controls for instance heart rate. Upon activation by SCFAs accumulating in the intestine, it may also signal to the brain via neural circuits which in turn would regulate intestinal gluconeogenesis. May also control the production of hormones involved in whole-body energy homeostasis. May for instance, regulate blood pressure through renin secretion. May also regulate secretion of the PYY peptide by enteroendocrine cells and control gut motility, intestinal transit rate, and the harvesting of energy from SCFAs produced by gut microbiota. May also indirectly regulate the production of LEP/Leptin, a hormone acting on the CNS to inhibit food intake, in response to the presence of short-chain fatty acids in the intestine. Finally, may also play a role in glucose homeostasis. Besides its role in energy homeostasis, may play a role in intestinal immunity. May mediate the activation of the inflammatory and immune response by SCFAs in the gut, regulating the rapid production of chemokines and cytokines by intestinal epithelial cells. The protein is Free fatty acid receptor 3 (Ffar3) of Rattus norvegicus (Rat).